Here is a 352-residue protein sequence, read N- to C-terminus: uncharacterized protein (352 aa).

The first 22 residues, 1 to 22 (MIFKKTILIFIISFFFISISFA), serve as a signal peptide directing secretion. The segment covering 25 to 47 (SSSSSSSSSSSSSSWSSSESSSS) has biased composition (low complexity). The interval 25–49 (SSSSSSSSSSSSSSWSSSESSSSPA) is disordered. Asn-76, Asn-110, Asn-182, Asn-212, and Asn-223 each carry an N-linked (GlcNAc...) asparagine glycan.

It localises to the secreted. This is an uncharacterized protein from Dictyostelium discoideum (Social amoeba).